The chain runs to 682 residues: Potassium-transporting ATPase ATP-binding subunit (682 aa).

Helical transmembrane passes span 35–55, 62–82, 219–239, and 254–274; these read VMFVVWLGSVVTTLLAVAMAA, TGFTVAISVWLWFTVLFANFA, IALTILLLALTIVLLLATVTL, and VLVALLVCLIPTTIGGLLSAI. The 4-aspartylphosphate intermediate role is filled by Asp307. ATP-binding positions include Asp344, Glu348, 377 to 384, and Lys395; that span reads FSAQTRMS. 2 residues coordinate Mg(2+): Asp518 and Asp522. 3 helical membrane passes run 577-597, 616-636, and 656-676; these read TFSIANDVAKYFAILPAAFAA, AILSAVIFNALVIVFLIPLAL, and IYGVGGLLVPFLGIKLIDMLL.

Belongs to the cation transport ATPase (P-type) (TC 3.A.3) family. Type IA subfamily. In terms of assembly, the system is composed of three essential subunits: KdpA, KdpB and KdpC.

It is found in the cell inner membrane. It catalyses the reaction K(+)(out) + ATP + H2O = K(+)(in) + ADP + phosphate + H(+). Part of the high-affinity ATP-driven potassium transport (or Kdp) system, which catalyzes the hydrolysis of ATP coupled with the electrogenic transport of potassium into the cytoplasm. This subunit is responsible for energy coupling to the transport system and for the release of the potassium ions to the cytoplasm. This is Potassium-transporting ATPase ATP-binding subunit from Erwinia tasmaniensis (strain DSM 17950 / CFBP 7177 / CIP 109463 / NCPPB 4357 / Et1/99).